Here is a 361-residue protein sequence, read N- to C-terminus: Histidinol-phosphate aminotransferase (361 aa).

Position 219 is an N6-(pyridoxal phosphate)lysine (K219).

The protein belongs to the class-II pyridoxal-phosphate-dependent aminotransferase family. Histidinol-phosphate aminotransferase subfamily. As to quaternary structure, homodimer. Pyridoxal 5'-phosphate serves as cofactor.

The catalysed reaction is L-histidinol phosphate + 2-oxoglutarate = 3-(imidazol-4-yl)-2-oxopropyl phosphate + L-glutamate. It participates in amino-acid biosynthesis; L-histidine biosynthesis; L-histidine from 5-phospho-alpha-D-ribose 1-diphosphate: step 7/9. The chain is Histidinol-phosphate aminotransferase from Cereibacter sphaeroides (strain ATCC 17029 / ATH 2.4.9) (Rhodobacter sphaeroides).